The chain runs to 295 residues: Pyridoxal 5'-phosphate synthase subunit PdxS (295 aa).

Position 25 (D25) interacts with D-ribose 5-phosphate. K82 functions as the Schiff-base intermediate with D-ribose 5-phosphate in the catalytic mechanism. Residue G154 participates in D-ribose 5-phosphate binding. R166 is a binding site for D-glyceraldehyde 3-phosphate. D-ribose 5-phosphate contacts are provided by residues G215 and 236-237 (GS).

It belongs to the PdxS/SNZ family. As to quaternary structure, in the presence of PdxT, forms a dodecamer of heterodimers.

It carries out the reaction aldehydo-D-ribose 5-phosphate + D-glyceraldehyde 3-phosphate + L-glutamine = pyridoxal 5'-phosphate + L-glutamate + phosphate + 3 H2O + H(+). It functions in the pathway cofactor biosynthesis; pyridoxal 5'-phosphate biosynthesis. In terms of biological role, catalyzes the formation of pyridoxal 5'-phosphate from ribose 5-phosphate (RBP), glyceraldehyde 3-phosphate (G3P) and ammonia. The ammonia is provided by the PdxT subunit. Can also use ribulose 5-phosphate and dihydroxyacetone phosphate as substrates, resulting from enzyme-catalyzed isomerization of RBP and G3P, respectively. The protein is Pyridoxal 5'-phosphate synthase subunit PdxS of Bacillus cereus (strain G9842).